A 670-amino-acid polypeptide reads, in one-letter code: Serine/threonine-rich protein adg2 (670 aa).

A signal peptide spans 1–19 (MRRLTISGLLISLAKLCAG). N77, N159, N204, N224, N274, N297, N327, N351, N370, N381, N405, N424, N435, N459, N478, N489, and N513 each carry an N-linked (GlcNAc...) asparagine glycan. Residues 526-651 (GSVSSFSSSP…MSLPPSAGSS (126 aa)) are disordered.

The protein localises to the secreted. It localises to the endoplasmic reticulum. The chain is Serine/threonine-rich protein adg2 (adg2) from Schizosaccharomyces pombe (strain 972 / ATCC 24843) (Fission yeast).